The primary structure comprises 237 residues: UPF0173 metal-dependent hydrolase BruAb2_0628 (237 aa).

This sequence belongs to the UPF0173 family.

This is UPF0173 metal-dependent hydrolase BruAb2_0628 from Brucella abortus biovar 1 (strain 9-941).